A 63-amino-acid polypeptide reads, in one-letter code: Large ribosomal subunit protein bL35 (63 aa).

It belongs to the bacterial ribosomal protein bL35 family.

This Campylobacter jejuni (strain RM1221) protein is Large ribosomal subunit protein bL35.